Reading from the N-terminus, the 248-residue chain is tRNA (guanine-N(1)-)-methyltransferase (248 aa).

S-adenosyl-L-methionine-binding positions include glycine 113 and 133 to 138; that span reads IGDYVL.

The protein belongs to the RNA methyltransferase TrmD family. As to quaternary structure, homodimer.

Its subcellular location is the cytoplasm. It carries out the reaction guanosine(37) in tRNA + S-adenosyl-L-methionine = N(1)-methylguanosine(37) in tRNA + S-adenosyl-L-homocysteine + H(+). Specifically methylates guanosine-37 in various tRNAs. This Shewanella frigidimarina (strain NCIMB 400) protein is tRNA (guanine-N(1)-)-methyltransferase.